The chain runs to 348 residues: GTP 3',8-cyclase (348 aa).

One can recognise a Radical SAM core domain in the interval 24-242; that stretch reads PFGRAVTYLR…EKQFTLTDID (219 aa). A GTP-binding site is contributed by Arg33. [4Fe-4S] cluster is bound by residues Cys40 and Cys44. S-adenosyl-L-methionine is bound at residue Tyr46. Cys47 provides a ligand contact to [4Fe-4S] cluster. Arg82 serves as a coordination point for GTP. Residue Gly86 participates in S-adenosyl-L-methionine binding. Thr115 is a binding site for GTP. Residue Ser139 coordinates S-adenosyl-L-methionine. Residue Lys175 coordinates GTP. Met209 is an S-adenosyl-L-methionine binding site. [4Fe-4S] cluster-binding residues include Cys272 and Cys275. 277 to 279 is a binding site for GTP; it reads RVR. Cys289 contributes to the [4Fe-4S] cluster binding site.

It belongs to the radical SAM superfamily. MoaA family. As to quaternary structure, monomer and homodimer. [4Fe-4S] cluster serves as cofactor.

The enzyme catalyses GTP + AH2 + S-adenosyl-L-methionine = (8S)-3',8-cyclo-7,8-dihydroguanosine 5'-triphosphate + 5'-deoxyadenosine + L-methionine + A + H(+). Its pathway is cofactor biosynthesis; molybdopterin biosynthesis. Its function is as follows. Catalyzes the cyclization of GTP to (8S)-3',8-cyclo-7,8-dihydroguanosine 5'-triphosphate. In Rhizobium leguminosarum bv. trifolii (strain WSM2304), this protein is GTP 3',8-cyclase.